The following is a 147-amino-acid chain: Large ribosomal subunit protein bL9 (147 aa).

Belongs to the bacterial ribosomal protein bL9 family.

In terms of biological role, binds to the 23S rRNA. The sequence is that of Large ribosomal subunit protein bL9 from Mycoplasmoides gallisepticum (strain R(low / passage 15 / clone 2)) (Mycoplasma gallisepticum).